The following is a 358-amino-acid chain: Methylthioribose-1-phosphate isomerase (358 aa).

Substrate is bound by residues 54-56 (RGA), arginine 96, and glutamine 205. The active-site Proton donor is the aspartate 246. Residue 256-257 (NK) coordinates substrate.

The protein belongs to the eIF-2B alpha/beta/delta subunits family. MtnA subfamily.

It catalyses the reaction 5-(methylsulfanyl)-alpha-D-ribose 1-phosphate = 5-(methylsulfanyl)-D-ribulose 1-phosphate. Its pathway is amino-acid biosynthesis; L-methionine biosynthesis via salvage pathway; L-methionine from S-methyl-5-thio-alpha-D-ribose 1-phosphate: step 1/6. Catalyzes the interconversion of methylthioribose-1-phosphate (MTR-1-P) into methylthioribulose-1-phosphate (MTRu-1-P). This is Methylthioribose-1-phosphate isomerase from Pseudomonas syringae pv. syringae (strain B728a).